A 40-amino-acid chain; its full sequence is Dolichyl-diphosphooligosaccharide--protein glycosyltransferase subunit 4 (40 aa).

The Lumenal segment spans residues 1-4 (MISD). The chain crosses the membrane as a helical span at residues 5–25 (VQLAIFSNVLGVFLFLLVVAY). The Cytoplasmic segment spans residues 26-40 (HYINANTGKPSAKAK).

The protein belongs to the OST4 family. As to quaternary structure, component of the oligosaccharyltransferase (OST) complex.

The protein localises to the endoplasmic reticulum membrane. Its function is as follows. Subunit of the oligosaccharyl transferase (OST) complex that catalyzes the initial transfer of a defined glycan (Glc(3)Man(9)GlcNAc(2) in eukaryotes) from the lipid carrier dolichol-pyrophosphate to an asparagine residue within an Asn-X-Ser/Thr consensus motif in nascent polypeptide chains, the first step in protein N-glycosylation. N-glycosylation occurs cotranslationally and the complex associates with the Sec61 complex at the channel-forming translocon complex that mediates protein translocation across the endoplasmic reticulum (ER). All subunits are required for a maximal enzyme activity. The protein is Dolichyl-diphosphooligosaccharide--protein glycosyltransferase subunit 4 of Drosophila yakuba (Fruit fly).